The chain runs to 520 residues: 2-methylcitrate dehydratase, mitochondrial (520 aa).

Residues 1-37 (MRAFRSAANFGAASNIYRKSFTPASIASNRFVSARMS) constitute a mitochondrion transit peptide.

It belongs to the PrpD family. In terms of assembly, monomer.

The protein localises to the mitochondrion. The catalysed reaction is (2S,3S)-2-methylcitrate = 2-methyl-cis-aconitate + H2O. It functions in the pathway organic acid metabolism; propanoate degradation. Its activity is regulated as follows. Several bivalent metal ions, such as nickel, copper, zinc, mercury, and lead, inhibit the activity to some extent. Inhibited by structural analogs such as citrate, cis-aconitate, isocitrate, 2-methylisocitrate, tricarballylate and fluorocitrate, but not by trans-aconitate or adipate. Functionally, component of the methylcitrate cycle that catalyzes the dehydration of 2-methylcitrate to 2-methyl-cis-aconitate. The methylcitrate cycle is a metabolic pathway for the consumption of propionic acid. The polypeptide is 2-methylcitrate dehydratase, mitochondrial (Yarrowia lipolytica (strain CLIB 122 / E 150) (Yeast)).